Here is a 512-residue protein sequence, read N- to C-terminus: SNF1-related protein kinase catalytic subunit alpha KIN10 (512 aa).

In terms of domain architecture, Protein kinase spans 19–271 (YKLGRTLGIG…IPEIRQHPWF (253 aa)). Residue Lys20 forms a Glycyl lysine isopeptide (Lys-Gly) (interchain with G-Cter in ubiquitin) linkage. An ATP-binding site is contributed by 25–33 (LGIGSFGRV). Residue Lys34 forms a Glycyl lysine isopeptide (Lys-Gly) (interchain with G-Cter in SUMO) linkage. Lys48 contributes to the ATP binding site. Lys63 is covalently cross-linked (Glycyl lysine isopeptide (Lys-Gly) (interchain with G-Cter in SUMO)). Catalysis depends on Asp142, which acts as the Proton acceptor. Position 164 is a phosphoserine (Ser164). Thr175 carries the post-translational modification Phosphothreonine; by GRIK1 or GRIK2. An auto-inhibitory domain (AID) region spans residues 290-389 (AKKIDEEILQ…GLRSQYPVER (100 aa)). The UBA domain maps to 292–332 (KIDEEILQEVINMGFDRNHLIESLRNRTQNDGTVTYYLILD). A regulatory domain (RD) region spans residues 294–512 (DEEILQEVIN…AAFLAQLRVL (219 aa)). At Ser364 the chain carries Phosphoserine. Lys390 is covalently cross-linked (Glycyl lysine isopeptide (Lys-Gly) (interchain with G-Cter in SUMO)). A PPI region spans residues 390-512 (KWALGLQSRA…AAFLAQLRVL (123 aa)). Residues 463–511 (AVKSPNVVKFEIQLYKTRDDKYLLDLQRVQGPQFLFLDLCAAFLAQLRV) form the KA1 domain.

This sequence belongs to the protein kinase superfamily. CAMK Ser/Thr protein kinase family. SNF1 subfamily. In terms of assembly, subunit of a probable heterotrimeric complex consisting of an alpha catalytic (KIN10 or KIN11) subunit, and a beta (KINB) and a gamma (KING or SNF4) non-catalytic regulatory subunits. Interacts with KINB2, KINB3, SNF4 and probably with KINB1 and KING1. Interacts with SKP1/ASK1, PAD1, the N-terminus of PRL1 and the WD40 domain of 5PTase13. Potential subunit of a SCF ubiquitin ligase complex consisting of a SNF1-related protein kinase, SKP1 and CUL1. The association of the SCF complex with the proteasome may be mediated by PAD1 and seems to be inhibited by the interaction with PRL1. Interacts with ATAF1. Interacts with ESD4. Interacts with SCE1. Interacts with FUS3. Interacts with PP2C74. Interacts with CDKE1. Interacts with ABI1 and PP2CA. Interacts with KRP6. Interacts with CIPK14. Interacts with FLZ proteins through their FLZ-type zinc finger domains. Interacts with GEBP/STKR1. Interacts with MYC2. Interacts with IDD8. Interacts with BZIP63. Interacts with PTL. Interacts with FLZ3, FLZ9, TCP3, TCP13, HB21/ZHD3 and HB23/ZHD10. Interacts with PTP1. Interacts with RAPTOR1B. Forms oligomers in vitro under strongly reducing conditions. Interacts with WRI1. Interacts with EIN3. Component of a ternary complex composed of BZIP2-BZIP63 heterodimer and KIN10. Interacts with IPK2b. Interacts with FLZ6 and FLZ10. Post-translationally, phosphorylated at Thr-175 in response to glucose. Phosphorylated at Thr-175 under submergence. Autophosphorylated. Dephosphorylated at Thr-175 by ABI1 and PP2CA. In terms of processing, ubiquitinated. Degradation is mediated by a CUL4-based E3 ligase that uses PRL1 as a substrate receptor. Sumoylated by SIZ1. Sumoylated SnRK1 is ubiquitinated and degraded by the proteasome. Isoform 2 is widely expressed, especially in newly developing tissues. Isoform 2 is expressed throughout the seedling, with highest expression in leaf primordia and vascular tissue, and the seedling root tip. Isoform 2 is later expressed in developing lateral root primordia and developing embryos within siliques. Isoform 1 is widely expressed but at very low levels.

The protein resides in the plastid. It localises to the chloroplast. Its subcellular location is the cytoplasm. The protein localises to the nucleus. It is found in the golgi apparatus. The protein resides in the endoplasmic reticulum. The catalysed reaction is L-seryl-[protein] + ATP = O-phospho-L-seryl-[protein] + ADP + H(+). It carries out the reaction L-threonyl-[protein] + ATP = O-phospho-L-threonyl-[protein] + ADP + H(+). Its activity is regulated as follows. Activated by phosphorylation at Thr-175 by GRIK1/SNAK2 and GRIK2/SNAK1. Inactivated by dephosphorylation at Thr-175. Inhibited by trehalose-6-phosphate. Down-regulated by SR45 by affecting its stability. Reduced kinase activity in response to H(2)O(2) treatment. The redox-state of Cys-177 seems to directly influence its kinase activity. Down-regulated by FLZ6 and FLZ10. In terms of biological role, catalytic subunit of the probable trimeric SNF1-related protein kinase (SnRK) complex, a central regulator of cellular energy homeostasis, which, in response to seemingly unrelated darkness, sugar and stress conditions, activates energy-producing pathways and inhibits energy-consuming processes. May play a role in a signal transduction cascade regulating gene expression and carbohydrate metabolism in higher plants. The SnRK complex may also be involved in the regulation of fatty acid synthesis by phosphorylation of acetyl-CoA carboxylase and in assimilation of nitrogen by phosphorylating nitrate reductase. In vitro, KIN10 exhibits kinase activity on sucrose phosphate synthase and the kinase activity is inhibited by PRL1. May be a subunit of a SCF ubiquitin ligase complex and thus be involved in proteasomal ubiquitination. Phosphorylates GRIK1/SNAK2 and GRIK2/SNAK1 in vitro. Cooperates with FUS3 to regulate developmental phase transitions and lateral organ development and act both as positive regulators of abscisic acid (ABA) signaling during germination. Phosphorylates FUS3 in embryo. Negatively modulates MYC2 accumulation through its protein phosphorylation. Phosphorylates geminivirus (CaLCuV, TGMV, ToMoV) AL2 protein resulting in a delay in the viral DNA accumulation and symptom appearance during infection. Regulates bZIP63 activity to alter metabolism in response to starvation through its protein phosphorylation. Under sugar deprivation conditions, antagonizes the IDD8 function in flowering time control by its protein phosphorylation. Plays a cardinal role in the control of cell proliferation through inhibition of KRP6 activity by its protein phosphorylation. Under submergence, phosphorylates PTP1, leading to the release of the MPK6 signaling pathway inhibition. Triggers its own SUMO-mediated proteasomal degradation, establishing a negative feedback loop that attenuates SnRK1 signaling and prevents detrimental hyperactivation of stress responses. Phosphorylates RAPTOR1B in vitro. Phosphorylates and down-regulates HMGR1S in vitro. Kinase activity is redox-sensitive. Acts upstream of TOR in the regulation of autophagy. Required for the activation of autophagy by many abiotic stresses. Involved in positive regulation of autophagy, possibly by affecting the phosphorylation of ATG1 proteins. Negatively modulates WRI1 accumulation through its protein phosphorylation. Modulates leaf senescence progression by the negative regulation of EIN3 accumulation through its protein phosphorylation. Under extended darkness, C/S1-bZIP-SnRK1 complex interacts with the histone acetylation machinery to remodel chromatin and facilitate transcription. BZIP2-BZIP63-KIN10 complex binds to the ETFQO promoter to up-regulate its transcription. Phosphorylates and down-regulates IPK2b in vitro. Involved in the regulation of sucrose-induced hypocotyl elongation under light/dark cycles. This Arabidopsis thaliana (Mouse-ear cress) protein is SNF1-related protein kinase catalytic subunit alpha KIN10.